The chain runs to 182 residues: Putative pre-16S rRNA nuclease (182 aa).

The protein belongs to the YqgF nuclease family.

Its subcellular location is the cytoplasm. Functionally, could be a nuclease involved in processing of the 5'-end of pre-16S rRNA. The protein is Putative pre-16S rRNA nuclease of Corynebacterium glutamicum (strain ATCC 13032 / DSM 20300 / JCM 1318 / BCRC 11384 / CCUG 27702 / LMG 3730 / NBRC 12168 / NCIMB 10025 / NRRL B-2784 / 534).